We begin with the raw amino-acid sequence, 910 residues long: Epithelial discoidin domain-containing receptor 1 (910 aa).

An N-terminal signal peptide occupies residues 1–19 (MGTGTLSSLLLLLLLVTIG). The Extracellular segment spans residues 22 to 414 (DMKGHFDPAK…VAKAEGSPTA (393 aa)). The F5/8 type C domain occupies 32 to 186 (CRYALGMQDR…VCLRVELYGC (155 aa)). Cystine bridges form between Cys-32–Cys-186 and Cys-75–Cys-178. The segment at 193–368 (LSYTAPVGQT…LFSEISFISD (176 aa)) is DS-like domain. Ca(2+) is bound by residues Asn-212, Gln-231, Asp-234, Val-236, Tyr-254, and Tyr-256. Asn-212 carries N-linked (GlcNAc...) asparagine glycosylation. An N-linked (GlcNAc...) asparagine glycan is attached at Asn-261. Cys-304 and Cys-349 are joined by a disulfide. Residues Ser-361 and Glu-362 each coordinate Ca(2+). Asn-371 and Asn-391 each carry an N-linked (GlcNAc...) asparagine glycan. Residues 415-435 (ILIGCLVAIILLLLLIIALML) form a helical membrane-spanning segment. Over 436-910 (WRLHWRRLLS…FLADDALNTV (475 aa)) the chain is Cytoplasmic. Residues 467-494 (ILINNRPGPREPPPYQEPRPRGTPTHSA) form a disordered region. Positions 478–481 (PPPY) match the PPxY motif motif. Phosphotyrosine; by autocatalysis occurs at positions 481, 510, and 517. One can recognise a Protein kinase domain in the interval 607 to 902 (LRFKEKLGEG…PPFSQLHRFL (296 aa)). ATP-binding positions include 613–621 (LGEGQFGEV) and Lys-652. Position 737 is a phosphotyrosine; by autocatalysis (Tyr-737). The active-site Proton acceptor is Asp-763. Residues Tyr-789, Tyr-793, and Tyr-794 each carry the phosphotyrosine; by autocatalysis modification.

The protein belongs to the protein kinase superfamily. Tyr protein kinase family. Insulin receptor subfamily. In terms of assembly, homodimer. Interacts (via PPxY motif) with WWC1 (via WW domains) in a collagen-regulated manner. Forms a tripartite complex with WWC1 and PRKCZ, but predominantly in the absence of collagen. Interacts (tyrosine phosphorylated) with SHC1. Interacts with SRC. Interacts with MYH9. Interacts with CDH1. Interacts with PTPN11. Interacts with NCK2. Autophosphorylated in response to fibrillar collagen binding. Various embryonic and adult tissues; also proliferative zones of the developing brain; hippocampal neurons.

It is found in the cell membrane. It catalyses the reaction L-tyrosyl-[protein] + ATP = O-phospho-L-tyrosyl-[protein] + ADP + H(+). Its function is as follows. Tyrosine kinase that functions as a cell surface receptor for fibrillar collagen and regulates cell attachment to the extracellular matrix, remodeling of the extracellular matrix, cell migration, differentiation, survival and cell proliferation. Collagen binding triggers a signaling pathway that involves SRC and leads to the activation of MAP kinases. Regulates remodeling of the extracellular matrix by up-regulation of the matrix metalloproteinases MMP2, MMP7 and MMP9, and thereby facilitates cell migration and wound healing. Promotes smooth muscle cell migration, and thereby contributes to arterial wound healing. Also plays a role in tumor cell invasion. Phosphorylates PTPN11. Required for normal blastocyst implantation during pregnancy, for normal mammary gland differentiation and normal lactation. Required for normal ear morphology and normal hearing. This Rattus norvegicus (Rat) protein is Epithelial discoidin domain-containing receptor 1 (Ddr1).